A 193-amino-acid chain; its full sequence is MLIALLIILAYVIGSIPSGLIVGKLAKGIDIREHGSGNLGATNAFRTLGVKAGSVVIAADILKGTLAAALPYLLHVPIHPLLAGVAAVIGHVFPVFAKFKGGKAVATSGGVLLFYAPLLFVTMVAVFFVFLFLTKFVSLSSMLTGIYTIIYCLFVKDPYLLVVVTLLTAFVIYRHRANIKRIINKTEPKIKWF.

4 consecutive transmembrane segments (helical) span residues 2 to 22, 76 to 96, 112 to 132, and 152 to 172; these read LIALLIILAYVIGSIPSGLIV, VPIHPLLAGVAAVIGHVFPVF, LLFYAPLLFVTMVAVFFVFLF, and CLFVKDPYLLVVVTLLTAFVI.

This sequence belongs to the PlsY family. As to quaternary structure, probably interacts with PlsX.

It is found in the cell membrane. It catalyses the reaction an acyl phosphate + sn-glycerol 3-phosphate = a 1-acyl-sn-glycero-3-phosphate + phosphate. The protein operates within lipid metabolism; phospholipid metabolism. Functionally, catalyzes the transfer of an acyl group from acyl-phosphate (acyl-PO(4)) to glycerol-3-phosphate (G3P) to form lysophosphatidic acid (LPA). This enzyme utilizes acyl-phosphate as fatty acyl donor, but not acyl-CoA or acyl-ACP. This is Glycerol-3-phosphate acyltransferase from Bacillus velezensis (strain DSM 23117 / BGSC 10A6 / LMG 26770 / FZB42) (Bacillus amyloliquefaciens subsp. plantarum).